A 446-amino-acid chain; its full sequence is MREILHIQGGQCGNQIGAKFWEVVCDEHGIDPTGRYTGNSDLQLERVNVYYNEASCGRFVPRAVLMDLEPGTMDSVRTGPYGQIFRPDNFVFGQSGAGNNWAKGHYTEGAELIDSVLDVVRKEAENCDCLQGFQVCHSLGGGTGSGMGTLLISKIREEYPDRMMLTFSVFPSPKVSDTVVEPYNATLSVHQLVENADECMVLDNEALYDICFRTLKLTTPSFGDLNHLISATMSGVTCCLRFPGQLNSDLRKLAVNLIPFPRLHFFMVGFAPLTSRGSQQYRALTVPELTQQMWDAKNMMCAADPRHGRYLTASAMFRGKMSTKEVDEQMINVQNKNSSYFVEWIPNNVKSSVCDIPPRGLSMASTFIGNSTSIQEMFRRVSEQFTAMFRRKAFLHWYTGEGMDEMEFTEAESNMNDLVSEYQQYQDATADEEEYEDEEEVQADDM.

The GTP site is built by Gln11, Glu69, Ser138, Gly142, Thr143, Gly144, Asn204, and Asn226. A Mg(2+)-binding site is contributed by Glu69. The interval 426-446 (QDATADEEEYEDEEEVQADDM) is disordered. Acidic residues predominate over residues 429 to 446 (TADEEEYEDEEEVQADDM).

This sequence belongs to the tubulin family. Dimer of alpha and beta chains. A typical microtubule is a hollow water-filled tube with an outer diameter of 25 nm and an inner diameter of 15 nM. Alpha-beta heterodimers associate head-to-tail to form protofilaments running lengthwise along the microtubule wall with the beta-tubulin subunit facing the microtubule plus end conferring a structural polarity. Microtubules usually have 13 protofilaments but different protofilament numbers can be found in some organisms and specialized cells. Requires Mg(2+) as cofactor.

The protein resides in the cytoplasm. It localises to the cytoskeleton. Tubulin is the major constituent of microtubules, a cylinder consisting of laterally associated linear protofilaments composed of alpha- and beta-tubulin heterodimers. Microtubules grow by the addition of GTP-tubulin dimers to the microtubule end, where a stabilizing cap forms. Below the cap, tubulin dimers are in GDP-bound state, owing to GTPase activity of alpha-tubulin. This Zea mays (Maize) protein is Tubulin beta-6 chain (TUBB6).